The primary structure comprises 215 residues: Nascent polypeptide-associated complex subunit alpha (215 aa).

The tract at residues 1–82 is disordered; sequence MPGEATETVP…EKKARKAMSK (82 aa). The span at 9-28 shows a compositional bias: polar residues; the sequence is VPVTEQEMQQPQAETGSGTE. The segment covering 29–42 has biased composition (acidic residues); that stretch reads SDSDESVPDLEEGD. Residues 44–57 show a composition bias toward low complexity; the sequence is AQTQTQQAQLAAAA. Residues 70 to 135 form the NAC-A/B domain; it reads SRSEKKARKA…AKIEDLSQQA (66 aa). Position 166 is a phosphoserine (Ser-166). In terms of domain architecture, UBA spans 176–213; that stretch reads VEVKDIELVMSQANVSRAKAVRALKNNNNDIVNAIMEL.

This sequence belongs to the NAC-alpha family.

In terms of biological role, may promote appropriate targeting of ribosome-nascent polypeptide complexes. The protein is Nascent polypeptide-associated complex subunit alpha (naca) of Danio rerio (Zebrafish).